Here is a 101-residue protein sequence, read N- to C-terminus: Small ribosomal subunit protein uS14 (101 aa).

This sequence belongs to the universal ribosomal protein uS14 family. Part of the 30S ribosomal subunit. Contacts proteins S3 and S10.

Functionally, binds 16S rRNA, required for the assembly of 30S particles and may also be responsible for determining the conformation of the 16S rRNA at the A site. The polypeptide is Small ribosomal subunit protein uS14 (Vesicomyosocius okutanii subsp. Calyptogena okutanii (strain HA)).